The following is a 398-amino-acid chain: Thyrotropin-releasing hormone receptor (398 aa).

Residues 1–28 (MENETGSELNQTQLQPRAVVALEYQVVT) are Extracellular-facing. Residues Asn-3 and Asn-10 are each glycosylated (N-linked (GlcNAc...) asparagine). The helical transmembrane segment at 29-51 (ILLVLIICGLGIVGNIMVVLVVM) threads the bilayer. At 52–61 (RTKHMRTPTN) the chain is on the cytoplasmic side. The helical transmembrane segment at 62–83 (CYLVSLAVADLMVLVAAGLPNI) threads the bilayer. The Extracellular segment spans residues 84-99 (TDSIYGSWVYGYVGCL). A disulfide bridge links Cys-98 with Cys-179. Residues 100–121 (CITYLQYLGINASSCSITAFTI) traverse the membrane as a helical segment. Over 122–144 (ERYIAICHPIKAQFLCTFSRAKK) the chain is Cytoplasmic. The chain crosses the membrane as a helical span at residues 145-168 (IIIFVWAFTSIYCMLWFFLLDLNI). The Extracellular segment spans residues 169–193 (STYKDAIVVSCGYKISRNYYSPIYL). The helical transmembrane segment at 194-215 (MDFGVFYVVPMILATVLYGFIA) threads the bilayer. At 216–266 (RILFLSPIPSDPKENSNTWKNDSTHQNKNLNSKTSNRYFNSTVSSRKQVTK) the chain is on the cytoplasmic side. A helical membrane pass occupies residues 267–288 (MLAVVVILFALLWMPYRTLVVV). The Extracellular segment spans residues 289–296 (NSFLSSPF). A helical transmembrane segment spans residues 297–319 (QENWFLLFCRICIYLNSAINPVI). Residues 320-398 (YNLMSQKFRA…LASEVTFSQS (79 aa)) are Cytoplasmic-facing.

The protein belongs to the G-protein coupled receptor 1 family.

It localises to the cell membrane. Its function is as follows. Receptor for thyrotropin-releasing hormone (TRH). Upon ligand binding, this G-protein-coupled receptor triggers activation of the phosphatidylinositol (IP3)-calcium-protein kinase C (PKC) pathway. This Ovis aries (Sheep) protein is Thyrotropin-releasing hormone receptor (TRHR).